A 219-amino-acid polypeptide reads, in one-letter code: Protein-L-isoaspartate O-methyltransferase (219 aa).

Serine 64 is a catalytic residue.

The protein belongs to the methyltransferase superfamily. L-isoaspartyl/D-aspartyl protein methyltransferase family.

Its subcellular location is the cytoplasm. It catalyses the reaction [protein]-L-isoaspartate + S-adenosyl-L-methionine = [protein]-L-isoaspartate alpha-methyl ester + S-adenosyl-L-homocysteine. In terms of biological role, catalyzes the methyl esterification of L-isoaspartyl residues in peptides and proteins that result from spontaneous decomposition of normal L-aspartyl and L-asparaginyl residues. It plays a role in the repair and/or degradation of damaged proteins. In Chlorobaculum parvum (strain DSM 263 / NCIMB 8327) (Chlorobium vibrioforme subsp. thiosulfatophilum), this protein is Protein-L-isoaspartate O-methyltransferase.